A 105-amino-acid chain; its full sequence is Protamine-2 (105 aa).

Positions 1 to 74 (MVRYRMRSPS…RRSCRRRRRH (74 aa)) are disordered. Residues S8, S10, and S33 each carry the phosphoserine modification. The segment covering 33 to 42 (SPERVEDYGR) has biased composition (basic and acidic residues). Residues 43–74 (THRGHHRHRRCSRKRLHRIHKRRRSCRRRRRH) are compositionally biased toward basic residues.

Belongs to the protamine P2 family. As to quaternary structure, interacts with TDRP. In terms of processing, proteolytic processing into mature chains is required for histone eviction during spermatogenesis. Transition proteins (TNP1 and TNP2) are required for processing. As to expression, testis.

The protein resides in the nucleus. It localises to the chromosome. Protamines substitute for histones in the chromatin of sperm during the haploid phase of spermatogenesis. They compact sperm DNA into a highly condensed, stable and inactive complex. This chain is Protamine-2 (Prm2), found in Rattus fuscipes (Bush rat).